The sequence spans 163 residues: Phosphopantetheine adenylyltransferase (163 aa).

Ser10 provides a ligand contact to substrate. Residues 10–11 (SF) and His18 contribute to the ATP site. Substrate contacts are provided by Lys42, Leu74, and Arg88. Residues 89–91 (GLR), Glu99, and 124–130 (YSFLSSS) contribute to the ATP site.

It belongs to the bacterial CoaD family. As to quaternary structure, homohexamer. It depends on Mg(2+) as a cofactor.

Its subcellular location is the cytoplasm. The catalysed reaction is (R)-4'-phosphopantetheine + ATP + H(+) = 3'-dephospho-CoA + diphosphate. Its pathway is cofactor biosynthesis; coenzyme A biosynthesis; CoA from (R)-pantothenate: step 4/5. Its function is as follows. Reversibly transfers an adenylyl group from ATP to 4'-phosphopantetheine, yielding dephospho-CoA (dPCoA) and pyrophosphate. This is Phosphopantetheine adenylyltransferase from Bacillus mycoides (strain KBAB4) (Bacillus weihenstephanensis).